Here is a 102-residue protein sequence, read N- to C-terminus: NADH-quinone oxidoreductase subunit K (102 aa).

The next 3 membrane-spanning stretches (helical) occupy residues 5–25, 31–51, and 65–85; these read LSHY…GIFL, IVIL…MVAF, and LFIL…LVVF.

It belongs to the complex I subunit 4L family. NDH-1 is composed of 14 different subunits. Subunits NuoA, H, J, K, L, M, N constitute the membrane sector of the complex.

The protein resides in the cell inner membrane. It catalyses the reaction a quinone + NADH + 5 H(+)(in) = a quinol + NAD(+) + 4 H(+)(out). NDH-1 shuttles electrons from NADH, via FMN and iron-sulfur (Fe-S) centers, to quinones in the respiratory chain. The immediate electron acceptor for the enzyme in this species is believed to be ubiquinone. Couples the redox reaction to proton translocation (for every two electrons transferred, four hydrogen ions are translocated across the cytoplasmic membrane), and thus conserves the redox energy in a proton gradient. This Agrobacterium fabrum (strain C58 / ATCC 33970) (Agrobacterium tumefaciens (strain C58)) protein is NADH-quinone oxidoreductase subunit K.